Reading from the N-terminus, the 600-residue chain is Elongation factor 4 (600 aa).

Residues 4-186 (SKIRNFSIIA…AIVEKIPSPS (183 aa)) enclose the tr-type G domain. Residues 16 to 21 (DHGKST) and 133 to 136 (NKID) each bind GTP.

Belongs to the TRAFAC class translation factor GTPase superfamily. Classic translation factor GTPase family. LepA subfamily.

The protein resides in the cell membrane. The catalysed reaction is GTP + H2O = GDP + phosphate + H(+). In terms of biological role, required for accurate and efficient protein synthesis under certain stress conditions. May act as a fidelity factor of the translation reaction, by catalyzing a one-codon backward translocation of tRNAs on improperly translocated ribosomes. Back-translocation proceeds from a post-translocation (POST) complex to a pre-translocation (PRE) complex, thus giving elongation factor G a second chance to translocate the tRNAs correctly. Binds to ribosomes in a GTP-dependent manner. This Mycoplasma mycoides subsp. mycoides SC (strain CCUG 32753 / NCTC 10114 / PG1) protein is Elongation factor 4.